The primary structure comprises 282 residues: Shikimate dehydrogenase (NADP(+)) (282 aa).

Shikimate is bound by residues 15–17 (SKS) and T62. The active-site Proton acceptor is the K66. Positions 87 and 103 each coordinate shikimate. NADP(+)-binding positions include 127–131 (GAGGA), 151–156 (NRTHTK), and M220. Y222 contacts shikimate. G244 contributes to the NADP(+) binding site.

This sequence belongs to the shikimate dehydrogenase family. Homodimer.

It catalyses the reaction shikimate + NADP(+) = 3-dehydroshikimate + NADPH + H(+). It functions in the pathway metabolic intermediate biosynthesis; chorismate biosynthesis; chorismate from D-erythrose 4-phosphate and phosphoenolpyruvate: step 4/7. Functionally, involved in the biosynthesis of the chorismate, which leads to the biosynthesis of aromatic amino acids. Catalyzes the reversible NADPH linked reduction of 3-dehydroshikimate (DHSA) to yield shikimate (SA). This is Shikimate dehydrogenase (NADP(+)) from Shewanella baltica (strain OS223).